The primary structure comprises 119 residues: Large ribosomal subunit protein uL24 (119 aa).

The protein belongs to the universal ribosomal protein uL24 family. In terms of assembly, part of the 50S ribosomal subunit.

One of two assembly initiator proteins, it binds directly to the 5'-end of the 23S rRNA, where it nucleates assembly of the 50S subunit. Functionally, located at the polypeptide exit tunnel on the outside of the subunit. The sequence is that of Large ribosomal subunit protein uL24 from Haloquadratum walsbyi (strain DSM 16790 / HBSQ001).